The primary structure comprises 690 residues: Beta-galactosidase (690 aa).

Residue Asn-173 coordinates substrate. Glu-174 serves as the catalytic Proton donor. Trp-345 serves as a coordination point for substrate.

It belongs to the glycosyl hydrolase 42 family.

It catalyses the reaction Hydrolysis of terminal non-reducing beta-D-galactose residues in beta-D-galactosides.. With respect to regulation, activity stimulated by beta-mercaptoethanol. Functionally, highly specific towards beta-D-galactoside substrates. Hydrolyzes 5-bromo-4-chloro-3-indolyl-beta-D-galactopyranoside (X-Gal) and o-nitrophenyl-beta-D-galactopyranoside (ONPG). Has activity against p-nitrophenyl(pNP)-beta-D-galactoside, but not significantly at all towards pNP-alpha-D-galactoside, pNP-beta-D-glucoside, pNP-beta-D-mannoside, pNP-beta-L-fucoside, pNP-beta-D-xyloside, pNP-beta-L-arabinoside, pNP-beta-D-galuronide, pNP-beta-D-glucuronide, pNP-beta-D-lactoside or pNP-beta-D-cellobioside. The chain is Beta-galactosidase from Arthrobacter sp.